Reading from the N-terminus, the 351-residue chain is Probable NADP-dependent isopropanol dehydrogenase (351 aa).

Residues Cys37, His59, Glu60, and Asp150 each coordinate Zn(2+). Residues 175 to 178 (AGPV), 198 to 200 (DSR), 265 to 267 (VNY), and Lys340 each bind NADP(+).

This sequence belongs to the zinc-containing alcohol dehydrogenase family. It depends on Zn(2+) as a cofactor.

It catalyses the reaction propan-2-ol + NADP(+) = acetone + NADPH + H(+). In terms of biological role, alcohol dehydrogenase with a preference for medium chain secondary alcohols, such as 2-butanol and isopropanol. Has very low activity with primary alcohols, such as ethanol. Under physiological conditions, the enzyme reduces aldehydes and 2-ketones to produce secondary alcohols. Is also active with acetaldehyde and propionaldehyde. This chain is Probable NADP-dependent isopropanol dehydrogenase (adh), found in Mycoplasma pneumoniae (strain ATCC 29342 / M129 / Subtype 1) (Mycoplasmoides pneumoniae).